The primary structure comprises 182 residues: CDP-diacylglycerol--glycerol-3-phosphate 3-phosphatidyltransferase (182 aa).

At 2-12 (QFNIPTLLTLF) the chain is on the cytoplasmic side. A helical membrane pass occupies residues 13–37 (RVILIPFFVVVFYLPFAWAPMVSAL). Residues 38–60 (IFCIAAITDWFDGFLARRWNQST) are Periplasmic-facing. Residues 61–81 (RFGAFLDPVADKVLVAIAMVL) traverse the membrane as a helical segment. Over 82–86 (VTEHY) the chain is Cytoplasmic. The helical transmembrane segment at 87 to 107 (HSWWVTLPAATMIAREIIISA) threads the bilayer. Residues 108 to 145 (LREWMAELGKRSSVAVSWIGKVKTTAQMVALAWLLWRP) lie on the Periplasmic side of the membrane. A helical transmembrane segment spans residues 146–168 (NIWVEYAGIALFFVAAVLTLWSM). The Cytoplasmic portion of the chain corresponds to 169–181 (LQYLSAARGDLLD).

This sequence belongs to the CDP-alcohol phosphatidyltransferase class-I family.

The protein localises to the cell inner membrane. The enzyme catalyses a CDP-1,2-diacyl-sn-glycerol + sn-glycerol 3-phosphate = a 1,2-diacyl-sn-glycero-3-phospho-(1'-sn-glycero-3'-phosphate) + CMP + H(+). It functions in the pathway phospholipid metabolism; phosphatidylglycerol biosynthesis; phosphatidylglycerol from CDP-diacylglycerol: step 1/2. In terms of biological role, catalyzes the conversion of cytidine diphosphate diacylglycerol (CDP-DG) and glycerol 3-phosphate into phosphatidylglycerol. Essential for the synthesis of anionic phospholipids, thereby playing a role in balancing the ratio of zwitterionic and anionic phospholipids, which is thought to be important for normal membrane function. This Salmonella paratyphi A (strain ATCC 9150 / SARB42) protein is CDP-diacylglycerol--glycerol-3-phosphate 3-phosphatidyltransferase.